A 226-amino-acid chain; its full sequence is NADH-ubiquinone oxidoreductase 19.3 kDa subunit, mitochondrial (226 aa).

The interval 40–68 is disordered; it reads ATGAVAPAGAQHGIARRERREVPLPSQEG. The [4Fe-4S] cluster site is built by cysteine 101, cysteine 102, cysteine 166, and cysteine 196.

Belongs to the complex I 20 kDa subunit family. In terms of assembly, complex I is composed of about 40 different subunits. This is a component of the iron-sulfur (IP) fragment of the enzyme. [4Fe-4S] cluster is required as a cofactor.

It localises to the mitochondrion. It carries out the reaction a ubiquinone + NADH + 5 H(+)(in) = a ubiquinol + NAD(+) + 4 H(+)(out). Core subunit of the mitochondrial membrane respiratory chain NADH dehydrogenase (Complex I) that is believed to belong to the minimal assembly required for catalysis. Complex I functions in the transfer of electrons from NADH to the respiratory chain. The immediate electron acceptor for the enzyme is believed to be ubiquinone. The sequence is that of NADH-ubiquinone oxidoreductase 19.3 kDa subunit, mitochondrial from Neurospora crassa (strain ATCC 24698 / 74-OR23-1A / CBS 708.71 / DSM 1257 / FGSC 987).